Here is a 381-residue protein sequence, read N- to C-terminus: tRNA (guanine(26)-N(2))-dimethyltransferase (381 aa).

Residues 6-378 form the Trm1 methyltransferase domain; the sequence is FEVHEGKAKV…APYEVFVEVM (373 aa). 5 residues coordinate S-adenosyl-L-methionine: R38, R63, D80, D122, and A123.

This sequence belongs to the class I-like SAM-binding methyltransferase superfamily. Trm1 family. As to quaternary structure, monomer.

It catalyses the reaction guanosine(26) in tRNA + 2 S-adenosyl-L-methionine = N(2)-dimethylguanosine(26) in tRNA + 2 S-adenosyl-L-homocysteine + 2 H(+). In terms of biological role, dimethylates a single guanine residue at position 26 of a number of tRNAs using S-adenosyl-L-methionine as donor of the methyl groups. This Pyrococcus furiosus (strain ATCC 43587 / DSM 3638 / JCM 8422 / Vc1) protein is tRNA (guanine(26)-N(2))-dimethyltransferase.